The chain runs to 78 residues: Acyl carrier protein (78 aa).

The Carrier domain maps to 2-77 (SEIASRVKAI…DAVSYIEEHA (76 aa)). S37 carries the O-(pantetheine 4'-phosphoryl)serine modification.

It belongs to the acyl carrier protein (ACP) family. 4'-phosphopantetheine is transferred from CoA to a specific serine of apo-ACP by AcpS. This modification is essential for activity because fatty acids are bound in thioester linkage to the sulfhydryl of the prosthetic group.

It is found in the cytoplasm. It functions in the pathway lipid metabolism; fatty acid biosynthesis. In terms of biological role, carrier of the growing fatty acid chain in fatty acid biosynthesis. This chain is Acyl carrier protein, found in Bacteroides thetaiotaomicron (strain ATCC 29148 / DSM 2079 / JCM 5827 / CCUG 10774 / NCTC 10582 / VPI-5482 / E50).